The chain runs to 451 residues: DNA double-strand break repair protein Mre11 (451 aa).

Mn(2+) is bound by residues Asp8, His10, Asp49, and Asn84. His85 acts as the Proton donor in catalysis. Mn(2+) contacts are provided by His168, His198, and His200. The disordered stretch occupies residues 374 to 451 (REDNPPDLGD…GRPSLDRWIG (78 aa)). Residues 396 to 416 (GSEESSEEPEESDGEEVGLEV) show a composition bias toward acidic residues.

It belongs to the MRE11/RAD32 family. Homodimer. Forms a heterotetramer composed of two Mre11 subunits and two Rad50 subunits. Mn(2+) is required as a cofactor.

Its activity is regulated as follows. Nuclease activity is regulated by Rad50. Its function is as follows. Part of the Rad50/Mre11 complex, which is involved in the early steps of DNA double-strand break (DSB) repair. The complex may facilitate opening of the processed DNA ends to aid in the recruitment of HerA and NurA. Mre11 binds to DSB ends and has both double-stranded 3'-5' exonuclease activity and single-stranded endonuclease activity. This Methanopyrus kandleri (strain AV19 / DSM 6324 / JCM 9639 / NBRC 100938) protein is DNA double-strand break repair protein Mre11.